The chain runs to 216 residues: V-type ATP synthase subunit D (216 aa).

This sequence belongs to the V-ATPase D subunit family.

Produces ATP from ADP in the presence of a proton gradient across the membrane. The protein is V-type ATP synthase subunit D of Clostridium novyi (strain NT).